The sequence spans 555 residues: MSTSTFNRRWAGVILEALSRHGVRHLCIAPGSRSTPLTLAAAQHPAFTPHTHFDERGLGHLALGLAKASGEPVAVIVTSGTAVANLYPAVIEAGLTGEKLVVITADRPPELIDCGANQAIRQHSIFGSHPAATLDLPRPTPSIPAAWLISAIDETMGALAAGALHINTPFAEPLYGELDETDLTWQQAPGEWWQTTTPWLRYEKIQAVSAQADWPFWREQRGVVLAGRLTAQEGEAVAQWAARLGWPLIGDVLSQTGQPLPCADLWLAHPRAAALLAQAPVVVQFGGSLTGKRVLQWQSECRPQEYWVVDPLPGRLDPAHHRGRRIVADISAWLEQHPAHPMMPWDEPLEGLAAQTQRIVARELTEWGEAQVAHRLPELLPPDGQLFLGNSLTVRLVDALAQLPAGYPVYGNRGASGIDGLVSTAAGVQRATGKPTLAVLGDLSTLYDLNALALLRDAPAPFVLIVVNNNGGQIFSMLPTPAREREKFYCMPQNVCFAPAAAMFSLNYDAPESLAALKEAVTRAWRSSVATVIELRVPETAGAQVFSRLLKAVCA.

Belongs to the TPP enzyme family. MenD subfamily. In terms of assembly, homodimer. Mg(2+) serves as cofactor. The cofactor is Mn(2+). It depends on thiamine diphosphate as a cofactor.

It carries out the reaction isochorismate + 2-oxoglutarate + H(+) = 5-enolpyruvoyl-6-hydroxy-2-succinyl-cyclohex-3-ene-1-carboxylate + CO2. The protein operates within quinol/quinone metabolism; 1,4-dihydroxy-2-naphthoate biosynthesis; 1,4-dihydroxy-2-naphthoate from chorismate: step 2/7. Its pathway is quinol/quinone metabolism; menaquinone biosynthesis. In terms of biological role, catalyzes the thiamine diphosphate-dependent decarboxylation of 2-oxoglutarate and the subsequent addition of the resulting succinic semialdehyde-thiamine pyrophosphate anion to isochorismate to yield 2-succinyl-5-enolpyruvyl-6-hydroxy-3-cyclohexene-1-carboxylate (SEPHCHC). The polypeptide is 2-succinyl-5-enolpyruvyl-6-hydroxy-3-cyclohexene-1-carboxylate synthase (Cronobacter sakazakii (strain ATCC BAA-894) (Enterobacter sakazakii)).